We begin with the raw amino-acid sequence, 710 residues long: Polyribonucleotide nucleotidyltransferase (710 aa).

Positions 487 and 493 each coordinate Mg(2+). One can recognise a KH domain in the interval 554–613 (PKIITMTINPDKIRDVIGPSGKQINKIIEETGVKIDIEQDGTVFISSIDQQMNEKAKKII). The S1 motif domain occupies 623–691 (GEIYLGKVKR…KQGRVNLSRK (69 aa)).

This sequence belongs to the polyribonucleotide nucleotidyltransferase family. It depends on Mg(2+) as a cofactor.

It is found in the cytoplasm. The enzyme catalyses RNA(n+1) + phosphate = RNA(n) + a ribonucleoside 5'-diphosphate. Involved in mRNA degradation. Catalyzes the phosphorolysis of single-stranded polyribonucleotides processively in the 3'- to 5'-direction. This Bacillus cytotoxicus (strain DSM 22905 / CIP 110041 / 391-98 / NVH 391-98) protein is Polyribonucleotide nucleotidyltransferase.